The sequence spans 635 residues: 1-deoxy-D-xylulose-5-phosphate synthase (635 aa).

Thiamine diphosphate-binding positions include H72 and 113 to 115 (GHA). Position 144 (D144) interacts with Mg(2+). Residues 145 to 146 (GA), N174, Y287, and E370 contribute to the thiamine diphosphate site. N174 lines the Mg(2+) pocket.

Belongs to the transketolase family. DXPS subfamily. As to quaternary structure, homodimer. The cofactor is Mg(2+). Thiamine diphosphate is required as a cofactor.

It catalyses the reaction D-glyceraldehyde 3-phosphate + pyruvate + H(+) = 1-deoxy-D-xylulose 5-phosphate + CO2. It functions in the pathway metabolic intermediate biosynthesis; 1-deoxy-D-xylulose 5-phosphate biosynthesis; 1-deoxy-D-xylulose 5-phosphate from D-glyceraldehyde 3-phosphate and pyruvate: step 1/1. In terms of biological role, catalyzes the acyloin condensation reaction between C atoms 2 and 3 of pyruvate and glyceraldehyde 3-phosphate to yield 1-deoxy-D-xylulose-5-phosphate (DXP). This Trichodesmium erythraeum (strain IMS101) protein is 1-deoxy-D-xylulose-5-phosphate synthase.